The following is a 412-amino-acid chain: Multifunctional CCA protein (412 aa).

Glycine 8 and arginine 11 together coordinate ATP. CTP-binding residues include glycine 8 and arginine 11. Aspartate 21 and aspartate 23 together coordinate Mg(2+). ATP-binding residues include arginine 91, arginine 137, and arginine 140. Arginine 91, arginine 137, and arginine 140 together coordinate CTP. An HD domain is found at 225–326 (TGIHVMMVID…ADMLQATDAY (102 aa)).

Belongs to the tRNA nucleotidyltransferase/poly(A) polymerase family. Bacterial CCA-adding enzyme type 1 subfamily. As to quaternary structure, monomer. Can also form homodimers and oligomers. It depends on Mg(2+) as a cofactor. Ni(2+) serves as cofactor.

The enzyme catalyses a tRNA precursor + 2 CTP + ATP = a tRNA with a 3' CCA end + 3 diphosphate. The catalysed reaction is a tRNA with a 3' CCA end + 2 CTP + ATP = a tRNA with a 3' CCACCA end + 3 diphosphate. In terms of biological role, catalyzes the addition and repair of the essential 3'-terminal CCA sequence in tRNAs without using a nucleic acid template. Adds these three nucleotides in the order of C, C, and A to the tRNA nucleotide-73, using CTP and ATP as substrates and producing inorganic pyrophosphate. tRNA 3'-terminal CCA addition is required both for tRNA processing and repair. Also involved in tRNA surveillance by mediating tandem CCA addition to generate a CCACCA at the 3' terminus of unstable tRNAs. While stable tRNAs receive only 3'-terminal CCA, unstable tRNAs are marked with CCACCA and rapidly degraded. The chain is Multifunctional CCA protein from Nitrosomonas eutropha (strain DSM 101675 / C91 / Nm57).